Reading from the N-terminus, the 1323-residue chain is Nck-associated protein 5-like (1323 aa).

Disordered stretches follow at residues 1–22 (MDQP…DSME), 113–142 (QIPL…TSLP), 156–175 (QQLR…ALDA), 204–238 (PATP…PWAP), 260–314 (PGEE…DTLL), and 341–714 (GATG…EQPE). The mediates interaction with CDK5RAP2 and is required for homodimerization and microtubule bundle formation stretch occupies residues 1–135 (MDQPAGGTGK…PTSPAPNVSE (135 aa)). Positions 22–109 (ELSTCQELLH…LQQKLQLTAN (88 aa)) form a coiled coil. 2 stretches are compositionally biased toward pro residues: residues 162-172 (GPGPPATPPPA) and 226-236 (CGPPQPEPSPW). Residues 271-298 (ASSRAPPSAQGPSSGPHCAPGSSSSSSS) are compositionally biased toward low complexity. Residues 353 to 364 (PGKPNSPDPGPP) show a composition bias toward pro residues. Serine 436, serine 447, serine 466, and serine 473 each carry phosphoserine; by CDK1. Positions 480-483 (SRIP) match the (S/T)X(I/L)P motif 1 motif. Phosphoserine is present on residues serine 489, serine 492, and serine 494. The span at 531–542 (LRPSQSTVSTAL) shows a compositional bias: polar residues. Serine 573 is modified (phosphoserine; by CDK1). Over residues 647–660 (RPGDPSHTPLRDRL) the composition is skewed to basic and acidic residues. Threonine 654 bears the Phosphothreonine mark. Residues 743 to 1136 (RVYSSHSMGA…SGTPSKNLPK (394 aa)) are mediates interaction with beta-tubulin and is required for microtubule bundle formation. The residue at position 760 (serine 760) is a Phosphoserine; by CDK1. Disordered stretches follow at residues 778–875 (ALCP…HSAI), 892–948 (GQER…EVKT), 979–1003 (AYLS…GQAQ), and 1027–1323 (KELP…GSQG). Over residues 799–817 (KPKSPHSSPTKLPSKSPTK) the composition is skewed to low complexity. The (S/T)X(I/L)P motif 2 signature appears at 808–811 (TKLP). The (S/T)X(I/L)P motif 3; required for interaction with MAPRE1 motif lies at 918–921 (SKLP). The span at 925–934 (RRTEATKNKD) shows a compositional bias: basic and acidic residues. Residues 942–985 (LRKEVKTEARKLEAESLNISKLMAKAEDLRRALEEEKAYLSRAR) adopt a coiled-coil conformation. Basic and acidic residues predominate over residues 1027-1041 (KELPPKSWREPKPEY). Composition is skewed to polar residues over residues 1097 to 1112 (VSTT…TRTL) and 1124 to 1136 (HSSS…NLPK). A compositionally biased stretch (pro residues) spans 1143–1153 (DPPPGAPPARP). Residue serine 1184 is modified to Phosphoserine. 2 stretches are compositionally biased toward polar residues: residues 1225-1237 (TFPN…SSSD) and 1264-1273 (VDPSRTSTPQ). The segment covering 1302–1323 (LETSESLSDSLYDSLSSCGSQG) has biased composition (low complexity).

In terms of assembly, homodimer. Interacts with CDK5RAP2. Interacts with MAPRE1. Interacts with beta-tubulin. In terms of processing, CDK1/Cyclin B-dependent phosphorylation mediates its dissociation from centrosomes during mitosis.

The protein resides in the cytoplasm. The protein localises to the cytoskeleton. Its subcellular location is the microtubule organizing center. It localises to the centrosome. Regulates microtubule organization and stabilization. Promotes microtubule growth and bundling formation and stabilizes microtubules by increasing intense acetylation of microtubules. Both tubulin-binding and homodimer formation are required for NCKAP5L-mediated microtubule bundle formation. This Mus musculus (Mouse) protein is Nck-associated protein 5-like (Nckap5l).